We begin with the raw amino-acid sequence, 133 residues long: Membrane protein FAM174B (133 aa).

The N-terminal stretch at 1 to 19 (MWLYTFAVALIVIAQEING) is a signal peptide. Residues 20-67 (EPHTRPSSATPLNATLPPQEEGSAQNTTDAAVGSRLSTILRDLPTIKN) lie on the Extracellular side of the membrane. Residues 22 to 47 (HTRPSSATPLNATLPPQEEGSAQNTT) are disordered. N-linked (GlcNAc...) asparagine glycans are attached at residues Asn32, Asn45, and Asn67. The helical transmembrane segment at 68 to 88 (ISIFICVLTTLLITCLVIKIC) threads the bilayer. Residues 89–133 (RSARKIRKTRKYDIITTPAERVEMAPLNEENDEEDDSTLFDVKYR) are Cytoplasmic-facing. The interval 113-133 (APLNEENDEEDDSTLFDVKYR) is disordered. Positions 117–126 (EENDEEDDST) are enriched in acidic residues.

The protein belongs to the FAM174 family.

The protein localises to the cell membrane. Its subcellular location is the golgi apparatus. Its function is as follows. Essential for Golgi structural integrity. This chain is Membrane protein FAM174B (Fam174b), found in Danio rerio (Zebrafish).